The following is a 64-amino-acid chain: UPF0434 protein BAB2_0345 (64 aa).

This sequence belongs to the UPF0434 family.

In Brucella abortus (strain 2308), this protein is UPF0434 protein BAB2_0345.